Here is a 70-residue protein sequence, read N- to C-terminus: DNA-directed RNA polymerase subunit epsilon (70 aa).

This sequence belongs to the RNA polymerase subunit epsilon family. In terms of assembly, RNAP is composed of a core of 2 alpha, a beta and a beta' subunit. The core is associated with a delta subunit, and at least one of epsilon or omega. When a sigma factor is associated with the core the holoenzyme is formed, which can initiate transcription.

It catalyses the reaction RNA(n) + a ribonucleoside 5'-triphosphate = RNA(n+1) + diphosphate. In terms of biological role, a non-essential component of RNA polymerase (RNAP). This chain is DNA-directed RNA polymerase subunit epsilon, found in Bacillus mycoides (strain KBAB4) (Bacillus weihenstephanensis).